The chain runs to 116 residues: Flagellar transcriptional regulator FlhD (116 aa).

This sequence belongs to the FlhD family. As to quaternary structure, homodimer; disulfide-linked. Forms a heterohexamer composed of two FlhC and four FlhD subunits. Each FlhC binds a FlhD dimer, forming a heterotrimer, and a hexamer assembles by dimerization of two heterotrimers.

It is found in the cytoplasm. Its function is as follows. Functions in complex with FlhC as a master transcriptional regulator that regulates transcription of several flagellar and non-flagellar operons by binding to their promoter region. Activates expression of class 2 flagellar genes, including fliA, which is a flagellum-specific sigma factor that turns on the class 3 genes. Also regulates genes whose products function in a variety of physiological pathways. The protein is Flagellar transcriptional regulator FlhD of Pantoea ananatis (strain LMG 20103).